The chain runs to 282 residues: tRNA pseudouridine synthase A (282 aa).

Asp53 (nucleophile) is an active-site residue. Tyr119 contacts substrate.

It belongs to the tRNA pseudouridine synthase TruA family. Homodimer.

The catalysed reaction is uridine(38/39/40) in tRNA = pseudouridine(38/39/40) in tRNA. Its function is as follows. Formation of pseudouridine at positions 38, 39 and 40 in the anticodon stem and loop of transfer RNAs. The chain is tRNA pseudouridine synthase A from Corynebacterium efficiens (strain DSM 44549 / YS-314 / AJ 12310 / JCM 11189 / NBRC 100395).